The primary structure comprises 242 residues: MNDWLFDLGNSRFKCASLREGVIGPVTVLPYLTETMDAFALQELPRGRVAYLASVAAPAITTHVLEVLKIHFEQVQVAATVAACAGVRIAYAHPERFGVDRFLALLGSYGEGNVLVVGVGTALTIDLLAANGCHLGGRISASPTLMRQALHARAEQLPLSGGNYLEFAEDTEDALVSGCNGAAVALIERSLYEAHQRLDQSVRLLLHGGGVASLLPWLGDVVHRPTLVLDGLAIWAAVAANV.

7 to 14 is a binding site for ATP; sequence DLGNSRFK. Substrate is bound by residues Tyr-91 and 98-101; that span reads GVDR. The Proton acceptor role is filled by Asp-100. Thr-121 lines the ATP pocket. Thr-171 serves as a coordination point for substrate.

The protein belongs to the type III pantothenate kinase family. Homodimer. It depends on NH4(+) as a cofactor. Requires K(+) as cofactor.

It is found in the cytoplasm. It catalyses the reaction (R)-pantothenate + ATP = (R)-4'-phosphopantothenate + ADP + H(+). Its pathway is cofactor biosynthesis; coenzyme A biosynthesis; CoA from (R)-pantothenate: step 1/5. Catalyzes the phosphorylation of pantothenate (Pan), the first step in CoA biosynthesis. In Xylella fastidiosa (strain 9a5c), this protein is Type III pantothenate kinase.